The following is a 192-amino-acid chain: uncharacterized protein (192 aa).

Residues 7 to 29 form a helical; Signal-anchor membrane-spanning segment; it reads FIHSISGGSSLLSASEVFASAFF. Residues 51–67 traverse the membrane as a helical segment; the sequence is YFLCVLVSTFLNSLVII.

It localises to the membrane. This is an uncharacterized protein from Saccharomyces cerevisiae (strain ATCC 204508 / S288c) (Baker's yeast).